The following is a 95-amino-acid chain: Large ribosomal subunit protein bL25 (95 aa).

The protein belongs to the bacterial ribosomal protein bL25 family. Part of the 50S ribosomal subunit; part of the 5S rRNA/L5/L18/L25 subcomplex. Contacts the 5S rRNA. Binds to the 5S rRNA independently of L5 and L18.

This is one of the proteins that binds to the 5S RNA in the ribosome where it forms part of the central protuberance. This is Large ribosomal subunit protein bL25 from Haemophilus ducreyi (strain 35000HP / ATCC 700724).